The primary structure comprises 538 residues: Bifunctional purine biosynthesis protein PurH (538 aa).

One can recognise an MGS-like domain in the interval 6-158 (KHIPAPDLHR…KNHAYVATVV (153 aa)).

Belongs to the PurH family.

The enzyme catalyses (6R)-10-formyltetrahydrofolate + 5-amino-1-(5-phospho-beta-D-ribosyl)imidazole-4-carboxamide = 5-formamido-1-(5-phospho-D-ribosyl)imidazole-4-carboxamide + (6S)-5,6,7,8-tetrahydrofolate. The catalysed reaction is IMP + H2O = 5-formamido-1-(5-phospho-D-ribosyl)imidazole-4-carboxamide. It participates in purine metabolism; IMP biosynthesis via de novo pathway; 5-formamido-1-(5-phospho-D-ribosyl)imidazole-4-carboxamide from 5-amino-1-(5-phospho-D-ribosyl)imidazole-4-carboxamide (10-formyl THF route): step 1/1. Its pathway is purine metabolism; IMP biosynthesis via de novo pathway; IMP from 5-formamido-1-(5-phospho-D-ribosyl)imidazole-4-carboxamide: step 1/1. This is Bifunctional purine biosynthesis protein PurH from Brucella melitensis biotype 2 (strain ATCC 23457).